A 445-amino-acid polypeptide reads, in one-letter code: MGTSRYFVRKTTIPPPKRPRRIHVSPCHDTPILFGDEVKRCPWGHLAYGGSCLQSITLRDSETSMEELLPHDVIEYHIMVRLDVKTLLKFKSVSKQWMSTIQSPSFQERQLIHHLSQSSGDPHVLLVSLYDPCARQQDPSISSFEALRTFLVESSAASVQIPTPWEDKLYFVCNTSCDGLICLFSFYELPSIVVNPTTRWHRTFPKCNYQLVAADKGERHECFKVACPTPGFGKDKISGTYKPVWLYNSAELDLNDKPTTCEVFDFATNAWRYVFPASPHLILHTQDPVYVDGSLHWFTALSHEGETMVLSLDLHSETFQVISKAPFLNVSDEYYIVMCNLGDRLCVSEQKWPNQVIWSLDDSDHKTWKQIYSIDLIITSSLFFSAIFAFTPLAVLDKDKLLFYDSTHGDAFLTHDPDTKSYDLPYTSNRCATVVCYFPSLISIL.

The F-box domain occupies 64 to 112 (SMEELLPHDVIEYHIMVRLDVKTLLKFKSVSKQWMSTIQSPSFQERQLI).

The sequence is that of F-box protein At5g10340 from Arabidopsis thaliana (Mouse-ear cress).